Here is a 429-residue protein sequence, read N- to C-terminus: Enolase (429 aa).

Gln-163 is a binding site for (2R)-2-phosphoglycerate. Glu-205 (proton donor) is an active-site residue. The Mg(2+) site is built by Asp-242, Glu-287, and Asp-314. (2R)-2-phosphoglycerate contacts are provided by Lys-339, Arg-368, Ser-369, and Lys-390. The Proton acceptor role is filled by Lys-339.

The protein belongs to the enolase family. The cofactor is Mg(2+).

The protein resides in the cytoplasm. The protein localises to the secreted. Its subcellular location is the cell surface. It catalyses the reaction (2R)-2-phosphoglycerate = phosphoenolpyruvate + H2O. The protein operates within carbohydrate degradation; glycolysis; pyruvate from D-glyceraldehyde 3-phosphate: step 4/5. Its function is as follows. Catalyzes the reversible conversion of 2-phosphoglycerate (2-PG) into phosphoenolpyruvate (PEP). It is essential for the degradation of carbohydrates via glycolysis. The polypeptide is Enolase (Anaeromyxobacter dehalogenans (strain 2CP-C)).